We begin with the raw amino-acid sequence, 328 residues long: tRNA dimethylallyltransferase (328 aa).

19 to 26 (GPTASGKT) lines the ATP pocket. 21-26 (TASGKT) is a binding site for substrate. Interaction with substrate tRNA regions lie at residues 50–53 (DSAL), 174–178 (QRIQR), and 257–262 (RCVGYR).

The protein belongs to the IPP transferase family. Monomer. Mg(2+) is required as a cofactor.

The catalysed reaction is adenosine(37) in tRNA + dimethylallyl diphosphate = N(6)-dimethylallyladenosine(37) in tRNA + diphosphate. Catalyzes the transfer of a dimethylallyl group onto the adenine at position 37 in tRNAs that read codons beginning with uridine, leading to the formation of N6-(dimethylallyl)adenosine (i(6)A). The polypeptide is tRNA dimethylallyltransferase (Leptothrix cholodnii (strain ATCC 51168 / LMG 8142 / SP-6) (Leptothrix discophora (strain SP-6))).